A 147-amino-acid chain; its full sequence is Large ribosomal subunit protein uL13 (147 aa).

The protein belongs to the universal ribosomal protein uL13 family. In terms of assembly, part of the 50S ribosomal subunit.

Functionally, this protein is one of the early assembly proteins of the 50S ribosomal subunit, although it is not seen to bind rRNA by itself. It is important during the early stages of 50S assembly. This Rhodococcus opacus (strain B4) protein is Large ribosomal subunit protein uL13.